The following is a 357-amino-acid chain: Chorismate synthase (357 aa).

NADP(+) is bound at residue arginine 47. FMN-binding positions include 123 to 125 (RAS), glycine 281, 296 to 300 (KPTSS), and arginine 324.

Belongs to the chorismate synthase family. Homotetramer. The cofactor is FMNH2.

It catalyses the reaction 5-O-(1-carboxyvinyl)-3-phosphoshikimate = chorismate + phosphate. The protein operates within metabolic intermediate biosynthesis; chorismate biosynthesis; chorismate from D-erythrose 4-phosphate and phosphoenolpyruvate: step 7/7. Its function is as follows. Catalyzes the anti-1,4-elimination of the C-3 phosphate and the C-6 proR hydrogen from 5-enolpyruvylshikimate-3-phosphate (EPSP) to yield chorismate, which is the branch point compound that serves as the starting substrate for the three terminal pathways of aromatic amino acid biosynthesis. This reaction introduces a second double bond into the aromatic ring system. The protein is Chorismate synthase of Chlamydia trachomatis serovar D (strain ATCC VR-885 / DSM 19411 / UW-3/Cx).